Reading from the N-terminus, the 139-residue chain is MPVMPIPRRVRSFHGPHTTCLHAACGPVRASHLARTKYNNFDVYIKTRWLYGFIRFLLYFSCSLFTAALWGALAALFCLQYLGVRVLLRFQRKLSVLLLLLGRRRVDFRLVNELLVYGIHVTMLLVGGLGWCFMVFVDM.

2 helical membrane passes run 56–76 (FLLYFSCSLFTAALWGALAAL) and 116–136 (VYGIHVTMLLVGGLGWCFMVF).

(Microbial infection) Interacts with herpes simplex virus 1/HHV-1 protein CVC2/UL25.

It localises to the membrane. The protein localises to the nucleus. Its subcellular location is the cytoplasm. Functionally, may play a role in cell proliferation by promoting progression into S phase. Its function is as follows. (Microbial infection) Promotes human herpes simplex virus 1/HHV-1 proliferation. The chain is Transmembrane protein 250 from Homo sapiens (Human).